A 130-amino-acid chain; its full sequence is MSQAQYAGTGRRKNAVARVRLVPGTGKITVNKKDVEEYIPHADLRLVINQPFAVTSTVGQYDVFVNVNGGGYGGQAGAIRHGIARALLQVDPDFRDSLKRAGLLTRDARMVERKKPGLKKARKASQFSKR.

The protein belongs to the universal ribosomal protein uS9 family.

This Streptococcus gordonii (strain Challis / ATCC 35105 / BCRC 15272 / CH1 / DL1 / V288) protein is Small ribosomal subunit protein uS9.